The following is a 145-amino-acid chain: Transcription antitermination protein NusB (145 aa).

Belongs to the NusB family.

Its function is as follows. Involved in transcription antitermination. Required for transcription of ribosomal RNA (rRNA) genes. Binds specifically to the boxA antiterminator sequence of the ribosomal RNA (rrn) operons. The protein is Transcription antitermination protein NusB of Thiobacillus denitrificans (strain ATCC 25259 / T1).